A 351-amino-acid chain; its full sequence is Bifunctional UDP-glucose 4-epimerase and UDP-xylose 4-epimerase 3 (351 aa).

8 to 39 (NILVTGGAGFIGTHTVVQLLNQGFKVTIIDNL) is a binding site for NAD(+). S134 contributes to the substrate binding site. The Proton acceptor role is filled by Y158.

Belongs to the NAD(P)-dependent epimerase/dehydratase family. As to quaternary structure, homodimer. Heterodimer. It depends on NAD(+) as a cofactor. Ubiquitous.

The catalysed reaction is UDP-alpha-D-glucose = UDP-alpha-D-galactose. It catalyses the reaction UDP-beta-L-arabinopyranose = UDP-alpha-D-xylose. Its pathway is carbohydrate metabolism; galactose metabolism. The protein operates within nucleotide-sugar biosynthesis; UDP-L-arabinose biosynthesis; UDP-L-arabinose from UDP-alpha-D-xylose: step 1/1. It functions in the pathway cell wall biogenesis; cell wall polysaccharide biosynthesis. Strongly inhibited by UDP. In terms of biological role, catalyzes the interconversion between UDP-glucose and UDP-galactose and the interconversion between UDP-arabinose and UDP-xylose. Cooperates with UGE2 in pollen development. May preferentially act in the UDP-galactose to UDP-glucose direction, therefore displaying a role in carbohydrate catabolism. This Arabidopsis thaliana (Mouse-ear cress) protein is Bifunctional UDP-glucose 4-epimerase and UDP-xylose 4-epimerase 3 (UGE3).